Consider the following 314-residue polypeptide: Putative gluconeogenesis factor (314 aa).

Belongs to the gluconeogenesis factor family.

It is found in the cytoplasm. Functionally, required for morphogenesis under gluconeogenic growth conditions. This chain is Putative gluconeogenesis factor, found in Thermotoga maritima (strain ATCC 43589 / DSM 3109 / JCM 10099 / NBRC 100826 / MSB8).